The following is a 1412-amino-acid chain: DNA-directed RNA polymerase subunit beta' (1412 aa).

The Mg(2+) site is built by D543, D545, and D547. Residues C1017, C1092, C1099, and C1102 each contribute to the Zn(2+) site.

This sequence belongs to the RNA polymerase beta' chain family. In terms of assembly, the RNAP catalytic core consists of 2 alpha, 1 beta, 1 beta' and 1 omega subunit. When a sigma factor is associated with the core the holoenzyme is formed, which can initiate transcription. Mg(2+) is required as a cofactor. The cofactor is Zn(2+).

It catalyses the reaction RNA(n) + a ribonucleoside 5'-triphosphate = RNA(n+1) + diphosphate. DNA-dependent RNA polymerase catalyzes the transcription of DNA into RNA using the four ribonucleoside triphosphates as substrates. This Mesomycoplasma hyopneumoniae (strain 232) (Mycoplasma hyopneumoniae) protein is DNA-directed RNA polymerase subunit beta'.